The following is a 470-amino-acid chain: Tubulin gamma chain (470 aa).

144–150 (AGGTGSG) contacts GTP.

Belongs to the tubulin family.

Its subcellular location is the cytoplasm. It localises to the cytoskeleton. The protein localises to the microtubule organizing center. It is found in the spindle pole body. In terms of biological role, tubulin is the major constituent of microtubules. The gamma chain is found at microtubule organizing centers (MTOC) such as the spindle poles or the centrosome, suggesting that it is involved in the minus-end nucleation of microtubule assembly. This is Tubulin gamma chain (TUB4) from Eremothecium gossypii (strain ATCC 10895 / CBS 109.51 / FGSC 9923 / NRRL Y-1056) (Yeast).